Reading from the N-terminus, the 297-residue chain is Phosphatidylinositol N-acetylglucosaminyltransferase subunit C (297 aa).

4 helical membrane-spanning segments follow: residues 67-87 (VFVV…WLFG), 88-108 (TGLA…GGDG), 153-173 (SVFM…AAIV), and 239-259 (AFGG…LLLF).

Belongs to the PIGC family. Component of the glycosylphosphatidylinositol-N-acetylglucosaminyltransferase (GPI-GnT) complex composed at least by PIGA, PIGC, PIGH, PIGP, PIGQ, PIGY and DPM2. Interacts with PIGQ. Interacts with the heterodimer PIGA:PIGH.

The protein resides in the endoplasmic reticulum membrane. It functions in the pathway glycolipid biosynthesis; glycosylphosphatidylinositol-anchor biosynthesis. Functionally, part of the glycosylphosphatidylinositol-N-acetylglucosaminyltransferase (GPI-GnT) complex that catalyzes the transfer of N-acetylglucosamine from UDP-N-acetylglucosamine to phosphatidylinositol and participates in the first step of GPI biosynthesis. The protein is Phosphatidylinositol N-acetylglucosaminyltransferase subunit C of Rattus norvegicus (Rat).